The chain runs to 1077 residues: FKBP12-associated protein 1 homolog (1077 aa).

The tract at residues 1–173 is disordered; the sequence is METSKNPSDL…MPKNSKEIKK (173 aa). The segment covering 15–29 has biased composition (basic residues); sequence ANVKKNRRRFQKSQK. Ser33 carries the post-translational modification Phosphoserine. Positions 52–64 are enriched in basic and acidic residues; sequence EEVKTSLKEDSSK. A compositionally biased stretch (polar residues) spans 76–87; it reads PTSSVQLNVSKN. Residues 100-116 are compositionally biased toward basic and acidic residues; it reads SSKDEELRKHAKGEGKR. Positions 136 to 149 are enriched in low complexity; that stretch reads SSNSSQETSSSKGS. A compositionally biased stretch (basic and acidic residues) spans 153–173; sequence KSERSREAKSRMPKNSKEIKK. The RING-type; atypical zinc-finger motif lies at 197 to 247; sequence CSVCTDTINPSTSIWSCGTCYHVFHLSCIRKWCKNSIEQRNEDAWRCPYCQ. NF-X1-type zinc fingers lie at residues 290–308, 348–367, 420–441, 485–503, 541–558, 595–614, 708–729, and 738–760; these read CEHP…PCTA, CGEH…ACFE, CGLH…HCPF, CGHR…TCSE, CGRH…SKAQ, CGNH…RCLE, CKTH…SCKK, and CEHV…PCKA. The 63-residue stretch at 835-897 folds into the R3H domain; the sequence is SDFADEVESL…KRNVMVYNKG (63 aa).

This sequence belongs to the NFX1 family.

It localises to the cytoplasm. It is found in the golgi apparatus. Its subcellular location is the nucleus. Its function is as follows. May play a role in transcription regulation. This chain is FKBP12-associated protein 1 homolog (fap1), found in Schizosaccharomyces pombe (strain 972 / ATCC 24843) (Fission yeast).